Reading from the N-terminus, the 50-residue chain is Sperm protamine P1 (50 aa).

The protein belongs to the protamine P1 family. In terms of tissue distribution, testis.

It is found in the nucleus. The protein resides in the chromosome. Protamines substitute for histones in the chromatin of sperm during the haploid phase of spermatogenesis. They compact sperm DNA into a highly condensed, stable and inactive complex. The protein is Sperm protamine P1 (PRM1) of Natalus stramineus (Mexican funnel-eared bat).